We begin with the raw amino-acid sequence, 418 residues long: Dihydrolipoyllysine-residue acetyltransferase component of pyruvate dehydrogenase complex (418 aa).

The region spanning 2 to 78 (PIKLLMPALS…PVNSLIAVLI (77 aa)) is the Lipoyl-binding domain. K43 carries the N6-lipoyllysine modification. The region spanning 133–170 (FASPLAKRLAKIQNVRIEEIKGSGPHGRIIKQDVLSHK) is the Peripheral subunit-binding (PSBD) domain. H388 is an active-site residue.

Belongs to the 2-oxoacid dehydrogenase family. Forms a 24-polypeptide structural core with octahedral symmetry. (R)-lipoate is required as a cofactor.

The catalysed reaction is N(6)-[(R)-dihydrolipoyl]-L-lysyl-[protein] + acetyl-CoA = N(6)-[(R)-S(8)-acetyldihydrolipoyl]-L-lysyl-[protein] + CoA. The pyruvate dehydrogenase complex catalyzes the overall conversion of pyruvate to acetyl-CoA and CO(2). It contains multiple copies of three enzymatic components: pyruvate dehydrogenase (E1), dihydrolipoamide acetyltransferase (E2) and lipoamide dehydrogenase (E3). The polypeptide is Dihydrolipoyllysine-residue acetyltransferase component of pyruvate dehydrogenase complex (pdhC) (Rickettsia bellii (strain RML369-C)).